A 484-amino-acid polypeptide reads, in one-letter code: Carbohydrate sulfotransferase 7 (484 aa).

At Met1–Cys12 the chain is on the cytoplasmic side. The helical; Signal-anchor for type II membrane protein transmembrane segment at Lys13–Asp33 threads the bilayer. Residues Ser34–Val484 lie on the Lumenal side of the membrane. The disordered stretch occupies residues Arg71–Ala90. N-linked (GlcNAc...) asparagine glycosylation occurs at Asn87. Trp108–Phe114 contacts 3'-phosphoadenylyl sulfate. Asn184 is a glycosylation site (N-linked (GlcNAc...) asparagine). Arg276–Ser284 contacts 3'-phosphoadenylyl sulfate. N-linked (GlcNAc...) asparagine glycosylation occurs at Asn405. A Phosphoserine modification is found at Ser460. A compositionally biased stretch (basic and acidic residues) spans Ser460–Glu473. The disordered stretch occupies residues Ser460–Val484.

This sequence belongs to the sulfotransferase 1 family. Gal/GlcNAc/GalNAc subfamily. Widely expressed. Highly expressed in kidney. Expressed at lower level in heart, lung and liver.

Its subcellular location is the golgi apparatus membrane. The enzyme catalyses chondroitin beta-D-glucuronate + n 3'-phosphoadenylyl sulfate = chondroitin 6'-sulfate + n adenosine 3',5'-bisphosphate + n H(+). In terms of biological role, sulfotransferase that utilizes 3'-phospho-5'-adenylyl sulfate (PAPS) as sulfonate donor to catalyze the transfer of sulfate to position 6 of non-reducing N-acetylglucosamine (GlcNAc) residues. Preferentially acts on mannose-linked GlcNAc. Also able to catalyze the transfer of sulfate to position 6 of the N-acetylgalactosamine (GalNAc) residue of chondroitin. Also acts on core 2 mucin-type oligosaccharide and N-acetyllactosamine oligomer with a lower efficiency. Has weak or no activity toward keratan sulfate and oligosaccharides containing the Galbeta1-4GlcNAc. Catalyzes 6-O-sulfation of beta-benzyl GlcNAc but not alpha- or beta-benzyl GalNAc. The chain is Carbohydrate sulfotransferase 7 (Chst7) from Mus musculus (Mouse).